Consider the following 480-residue polypeptide: Protein U54 (480 aa).

The polypeptide is Protein U54 (Elephas maximus (Indian elephant)).